Here is a 483-residue protein sequence, read N- to C-terminus: Trigger factor (483 aa).

Positions 166-251 (TDTVNIDYVG…INDVFTKEKP (86 aa)) constitute a PPIase FKBP-type domain. The span at 435 to 460 (GEEPKLSTTKKVVEPTEEKTRKDSKM) shows a compositional bias: basic and acidic residues. Positions 435 to 483 (GEEPKLSTTKKVVEPTEEKTRKDSKMSTKKPAAKPAAKPAAATKKPVKK) are disordered. A compositionally biased stretch (low complexity) spans 467 to 483 (AKPAAKPAAATKKPVKK).

It belongs to the FKBP-type PPIase family. Tig subfamily.

It localises to the cytoplasm. The enzyme catalyses [protein]-peptidylproline (omega=180) = [protein]-peptidylproline (omega=0). Its function is as follows. Involved in protein export. Acts as a chaperone by maintaining the newly synthesized protein in an open conformation. Functions as a peptidyl-prolyl cis-trans isomerase. The sequence is that of Trigger factor from Mycoplasma mobile (strain ATCC 43663 / 163K / NCTC 11711) (Mesomycoplasma mobile).